A 153-amino-acid polypeptide reads, in one-letter code: Cytochrome c-type biogenesis protein CcmE (153 aa).

Residues 1 to 6 lie on the Cytoplasmic side of the membrane; that stretch reads MNARRR. Residues 7–27 traverse the membrane as a helical; Signal-anchor for type II membrane protein segment; that stretch reads LWSVLMLILAVGTAATLTIMA. Over 28–153 the chain is Periplasmic; it reads LRHNLTYLYM…LDTPIAETTP (126 aa). 2 residues coordinate heme: His121 and Tyr125. The span at 131–141 shows a compositional bias: polar residues; it reads ANKMQPTPTQH. Positions 131–153 are disordered; the sequence is ANKMQPTPTQHTHLDTPIAETTP.

This sequence belongs to the CcmE/CycJ family.

The protein resides in the cell inner membrane. Functionally, heme chaperone required for the biogenesis of c-type cytochromes. Transiently binds heme delivered by CcmC and transfers the heme to apo-cytochromes in a process facilitated by CcmF and CcmH. The chain is Cytochrome c-type biogenesis protein CcmE from Xylella fastidiosa (strain Temecula1 / ATCC 700964).